The chain runs to 356 residues: UDP-N-acetylglucosamine--N-acetylmuramyl-(pentapeptide) pyrophosphoryl-undecaprenol N-acetylglucosamine transferase (356 aa).

UDP-N-acetyl-alpha-D-glucosamine is bound by residues 12-14, N124, R163, S188, I242, and Q287; that span reads TGG.

This sequence belongs to the glycosyltransferase 28 family. MurG subfamily.

The protein localises to the cell inner membrane. It catalyses the reaction di-trans,octa-cis-undecaprenyl diphospho-N-acetyl-alpha-D-muramoyl-L-alanyl-D-glutamyl-meso-2,6-diaminopimeloyl-D-alanyl-D-alanine + UDP-N-acetyl-alpha-D-glucosamine = di-trans,octa-cis-undecaprenyl diphospho-[N-acetyl-alpha-D-glucosaminyl-(1-&gt;4)]-N-acetyl-alpha-D-muramoyl-L-alanyl-D-glutamyl-meso-2,6-diaminopimeloyl-D-alanyl-D-alanine + UDP + H(+). It functions in the pathway cell wall biogenesis; peptidoglycan biosynthesis. Cell wall formation. Catalyzes the transfer of a GlcNAc subunit on undecaprenyl-pyrophosphoryl-MurNAc-pentapeptide (lipid intermediate I) to form undecaprenyl-pyrophosphoryl-MurNAc-(pentapeptide)GlcNAc (lipid intermediate II). The chain is UDP-N-acetylglucosamine--N-acetylmuramyl-(pentapeptide) pyrophosphoryl-undecaprenol N-acetylglucosamine transferase from Pseudomonas syringae pv. syringae (strain B728a).